We begin with the raw amino-acid sequence, 429 residues long: Phosphoribosylamine--glycine ligase (429 aa).

In terms of domain architecture, ATP-grasp spans 109 to 316 (KDFLARHQIP…LVELCLAAID (208 aa)). 135 to 196 (VREQGAPIVV…EEFLDGEEAS (62 aa)) is an ATP binding site. Positions 212–234 (SQDHKRVGDKDTGPNTGGMGAYS) are disordered. The segment covering 213-223 (QDHKRVGDKDT) has biased composition (basic and acidic residues). Glu-286 and Asn-288 together coordinate Mg(2+).

It belongs to the GARS family. It depends on Mg(2+) as a cofactor. The cofactor is Mn(2+).

The catalysed reaction is 5-phospho-beta-D-ribosylamine + glycine + ATP = N(1)-(5-phospho-beta-D-ribosyl)glycinamide + ADP + phosphate + H(+). The protein operates within purine metabolism; IMP biosynthesis via de novo pathway; N(1)-(5-phospho-D-ribosyl)glycinamide from 5-phospho-alpha-D-ribose 1-diphosphate: step 2/2. This is Phosphoribosylamine--glycine ligase from Vibrio vulnificus (strain CMCP6).